The primary structure comprises 92 residues: Small ribosomal subunit protein uS19 (92 aa).

Belongs to the universal ribosomal protein uS19 family.

Functionally, protein S19 forms a complex with S13 that binds strongly to the 16S ribosomal RNA. The chain is Small ribosomal subunit protein uS19 from Clostridium botulinum (strain Eklund 17B / Type B).